A 92-amino-acid polypeptide reads, in one-letter code: DNA-directed RNA polymerase subunit omega (92 aa).

The protein belongs to the RNA polymerase subunit omega family. The RNAP catalytic core consists of 2 alpha, 1 beta, 1 beta' and 1 omega subunit. When a sigma factor is associated with the core the holoenzyme is formed, which can initiate transcription.

It carries out the reaction RNA(n) + a ribonucleoside 5'-triphosphate = RNA(n+1) + diphosphate. Promotes RNA polymerase assembly. Latches the N- and C-terminal regions of the beta' subunit thereby facilitating its interaction with the beta and alpha subunits. This Acinetobacter baumannii (strain AB307-0294) protein is DNA-directed RNA polymerase subunit omega.